We begin with the raw amino-acid sequence, 98 residues long: Integration host factor subunit beta (98 aa).

It belongs to the bacterial histone-like protein family. As to quaternary structure, heterodimer of an alpha and a beta chain.

This protein is one of the two subunits of integration host factor, a specific DNA-binding protein that functions in genetic recombination as well as in transcriptional and translational control. In Pseudomonas fluorescens (strain SBW25), this protein is Integration host factor subunit beta.